The primary structure comprises 340 residues: Polyporopepsin (340 aa).

The Peptidase A1 domain maps to 14–330 (YVVNVGVGSP…DTTNKRLGLA (317 aa)). The active site involves D32. Residue N192 is glycosylated (N-linked (GlcNAc...) asparagine). The active site involves D212. N238 carries an N-linked (GlcNAc...) asparagine glycan.

This sequence belongs to the peptidase A1 family.

The catalysed reaction is Milk clotting activity, broad specificity, but fails to cleave 15-Leu-|-Tyr-16 or 16-Tyr-|-Leu-17 of insulin B chain.. This Irpex lacteus (Milk-white toothed polypore) protein is Polyporopepsin.